The primary structure comprises 517 residues: Maturase K (517 aa).

The protein belongs to the intron maturase 2 family. MatK subfamily.

It localises to the plastid. The protein resides in the chloroplast. In terms of biological role, usually encoded in the trnK tRNA gene intron. Probably assists in splicing its own and other chloroplast group II introns. The chain is Maturase K from Juncus effusus (Soft rush).